The primary structure comprises 562 residues: Isochorismate synthase 2, chloroplastic (562 aa).

The N-terminal 55 residues, 1 to 55 (MASLQCSFHFLGTNPKKYNPSSIFQSYSRTSFTKLSSRVSRQRFLRCTLSMNGCE), are a transit peptide targeting the chloroplast.

The protein belongs to the isochorismate synthase family. It depends on Mg(2+) as a cofactor.

The protein localises to the plastid. The protein resides in the chloroplast. The enzyme catalyses chorismate = isochorismate. Its pathway is siderophore biosynthesis; salicylate biosynthesis. In terms of biological role, isochorismate synthase involved in the synthesis of salicylic acid (SA) required for both local and systemic acquired resistance (LAR and SAR) while SA synthesized through the phenylalanine ammonium lyase (PAL) pathway seems to potentiate plant cell death. Also involved in phylloquinone (vitamin K1) synthesis. Has no isochorismate pyruvate lyase (IPL) activity. The sequence is that of Isochorismate synthase 2, chloroplastic (ICS2) from Arabidopsis thaliana (Mouse-ear cress).